A 188-amino-acid chain; its full sequence is UPF0301 protein XOO1309 (188 aa).

The protein belongs to the UPF0301 (AlgH) family.

This is UPF0301 protein XOO1309 from Xanthomonas oryzae pv. oryzae (strain MAFF 311018).